Reading from the N-terminus, the 335-residue chain is Ornithine carbamoyltransferase (335 aa).

Residues 56–59 (STRT), Gln83, Arg107, and 134–137 (HPTQ) each bind carbamoyl phosphate. Residues Asn168, Asp232, and 236-237 (SM) contribute to the L-ornithine site. Residues 274-275 (CL) and Arg320 contribute to the carbamoyl phosphate site.

Belongs to the aspartate/ornithine carbamoyltransferase superfamily. OTCase family.

The protein localises to the cytoplasm. The enzyme catalyses carbamoyl phosphate + L-ornithine = L-citrulline + phosphate + H(+). Its pathway is amino-acid biosynthesis; L-arginine biosynthesis; L-arginine from L-ornithine and carbamoyl phosphate: step 1/3. Functionally, reversibly catalyzes the transfer of the carbamoyl group from carbamoyl phosphate (CP) to the N(epsilon) atom of ornithine (ORN) to produce L-citrulline. In Pectobacterium atrosepticum (strain SCRI 1043 / ATCC BAA-672) (Erwinia carotovora subsp. atroseptica), this protein is Ornithine carbamoyltransferase.